The chain runs to 106 residues: ER membrane protein complex subunit 5 (106 aa).

At 1–12 the chain is on the cytoplasmic side; sequence MESSTINAKKIS. A helical transmembrane segment spans residues 13 to 33; it reads VLLTLFSIIGYTAYSAHESIL. Residues 34–46 lie on the Lumenal side of the membrane; that stretch reads EIRQDGKLPLDIK. A helical transmembrane segment spans residues 47-67; sequence CEVILVTLLFTFTTVIIASPL. Over 68-106 the chain is Cytoplasmic; it reads RSIQLNKWSHQRSDLAFLNSRTNFLRIKELKEKIEKVKN.

Belongs to the membrane magnesium transporter (TC 1.A.67) family. Component of the ER membrane protein complex (EMC).

It is found in the endoplasmic reticulum membrane. In terms of biological role, the EMC seems to be required for efficient folding of proteins in the endoplasmic reticulum (ER). This chain is ER membrane protein complex subunit 5 (emc5), found in Schizosaccharomyces pombe (strain 972 / ATCC 24843) (Fission yeast).